We begin with the raw amino-acid sequence, 131 residues long: Small ribosomal subunit protein uS8 (131 aa).

Belongs to the universal ribosomal protein uS8 family. Part of the 30S ribosomal subunit. Contacts proteins S5 and S12.

Its function is as follows. One of the primary rRNA binding proteins, it binds directly to 16S rRNA central domain where it helps coordinate assembly of the platform of the 30S subunit. The chain is Small ribosomal subunit protein uS8 from Chlorobium phaeobacteroides (strain DSM 266 / SMG 266 / 2430).